Here is a 1218-residue protein sequence, read N- to C-terminus: ATP-dependent helicase/deoxyribonuclease subunit B (1218 aa).

In terms of domain architecture, UvrD-like helicase ATP-binding spans 1 to 279 (MRFIVGRAGT…VFLTETHRFE (279 aa)). 6–13 (GRAGTGKS) serves as a coordination point for ATP. In terms of domain architecture, UvrD-like helicase C-terminal spans 281–588 (AGLKHLERFY…LVGSLDRSRN (308 aa)). [4Fe-4S] cluster is bound at residue Cys-786. The interval 987–1006 (LAEGSKGSEGSEGSEDSEDS) is disordered. Residues Cys-1126, Cys-1129, and Cys-1135 each contribute to the [4Fe-4S] cluster site. Polar residues predominate over residues 1160 to 1169 (RVQSQDSEQY). The interval 1160-1218 (RVQSQDSEQYPEQHPPTSVPGETSRRALQKDGGNSPRGQELIWLGEDEAGAGKEDDGHE) is disordered. Residues 1209 to 1218 (GAGKEDDGHE) show a composition bias toward basic and acidic residues.

Belongs to the helicase family. AddB/RexB type 1 subfamily. Heterodimer of AddA and AddB. It depends on Mg(2+) as a cofactor. [4Fe-4S] cluster serves as cofactor.

In terms of biological role, the heterodimer acts as both an ATP-dependent DNA helicase and an ATP-dependent, dual-direction single-stranded exonuclease. Recognizes the chi site generating a DNA molecule suitable for the initiation of homologous recombination. The AddB subunit has 5' -&gt; 3' nuclease activity but not helicase activity. The chain is ATP-dependent helicase/deoxyribonuclease subunit B from Desulfitobacterium hafniense (strain DSM 10664 / DCB-2).